Consider the following 491-residue polypeptide: Putative diacyglycerol O-acyltransferase MT2557 (491 aa).

The active-site Proton acceptor is H145.

The protein belongs to the long-chain O-acyltransferase family.

The catalysed reaction is an acyl-CoA + a 1,2-diacyl-sn-glycerol = a triacyl-sn-glycerol + CoA. Its pathway is glycerolipid metabolism; triacylglycerol biosynthesis. This Mycobacterium tuberculosis (strain CDC 1551 / Oshkosh) protein is Putative diacyglycerol O-acyltransferase MT2557.